Here is a 155-residue protein sequence, read N- to C-terminus: Ribosomal RNA large subunit methyltransferase H (155 aa).

S-adenosyl-L-methionine contacts are provided by residues L72, G103, and 122-127; that span reads LSPLTL.

It belongs to the RNA methyltransferase RlmH family. Homodimer.

The protein localises to the cytoplasm. It carries out the reaction pseudouridine(1915) in 23S rRNA + S-adenosyl-L-methionine = N(3)-methylpseudouridine(1915) in 23S rRNA + S-adenosyl-L-homocysteine + H(+). Functionally, specifically methylates the pseudouridine at position 1915 (m3Psi1915) in 23S rRNA. In Haemophilus influenzae (strain PittEE), this protein is Ribosomal RNA large subunit methyltransferase H.